Consider the following 191-residue polypeptide: UPF0312 protein Shewmr7_1249 (191 aa).

An N-terminal signal peptide occupies residues 1–22 (MKKQLLAALIGGFLLAPMAASA).

It belongs to the UPF0312 family. Type 1 subfamily.

Its subcellular location is the periplasm. This chain is UPF0312 protein Shewmr7_1249, found in Shewanella sp. (strain MR-7).